A 161-amino-acid chain; its full sequence is 2-C-methyl-D-erythritol 2,4-cyclodiphosphate synthase (161 aa).

A divalent metal cation-binding residues include D10 and H12. Residues 10-12 and 36-37 each bind 4-CDP-2-C-methyl-D-erythritol 2-phosphate; these read DVH and HS. Residue H44 coordinates a divalent metal cation. 4-CDP-2-C-methyl-D-erythritol 2-phosphate is bound by residues 58–60, 63–67, and R144; these read DIG and FSDTD.

It belongs to the IspF family. As to quaternary structure, homotrimer. Requires a divalent metal cation as cofactor.

The catalysed reaction is 4-CDP-2-C-methyl-D-erythritol 2-phosphate = 2-C-methyl-D-erythritol 2,4-cyclic diphosphate + CMP. Its pathway is isoprenoid biosynthesis; isopentenyl diphosphate biosynthesis via DXP pathway; isopentenyl diphosphate from 1-deoxy-D-xylulose 5-phosphate: step 4/6. Involved in the biosynthesis of isopentenyl diphosphate (IPP) and dimethylallyl diphosphate (DMAPP), two major building blocks of isoprenoid compounds. Catalyzes the conversion of 4-diphosphocytidyl-2-C-methyl-D-erythritol 2-phosphate (CDP-ME2P) to 2-C-methyl-D-erythritol 2,4-cyclodiphosphate (ME-CPP) with a corresponding release of cytidine 5-monophosphate (CMP). The protein is 2-C-methyl-D-erythritol 2,4-cyclodiphosphate synthase of Burkholderia ambifaria (strain ATCC BAA-244 / DSM 16087 / CCUG 44356 / LMG 19182 / AMMD) (Burkholderia cepacia (strain AMMD)).